The chain runs to 203 residues: dCTP deaminase (203 aa).

Residues 105 to 110, D123, 131 to 133, Q152, Y166, K173, and Q177 contribute to the dCTP site; these read RSSLGR and TLE. E133 functions as the Proton donor/acceptor in the catalytic mechanism. The disordered stretch occupies residues 164–203; it reads RPYGVERGSKYQDQDGPQASRIGSDPEFHSDENQAAEHES. The segment covering 166–176 has biased composition (basic and acidic residues); it reads YGVERGSKYQD. The segment covering 187–203 has biased composition (basic and acidic residues); it reads SDPEFHSDENQAAEHES.

This sequence belongs to the dCTP deaminase family. As to quaternary structure, homotrimer.

The catalysed reaction is dCTP + H2O + H(+) = dUTP + NH4(+). It participates in pyrimidine metabolism; dUMP biosynthesis; dUMP from dCTP (dUTP route): step 1/2. In terms of biological role, catalyzes the deamination of dCTP to dUTP. The polypeptide is dCTP deaminase (Halorubrum lacusprofundi (strain ATCC 49239 / DSM 5036 / JCM 8891 / ACAM 34)).